Here is a 652-residue protein sequence, read N- to C-terminus: Acetyl-coenzyme A synthetase (652 aa).

Residues 191–194 (RAGR), threonine 311, and asparagine 335 each bind CoA. ATP-binding positions include 387 to 389 (GEP), 411 to 416 (DTWWQT), aspartate 500, and arginine 515. Serine 523 contacts CoA. Arginine 526 is an ATP binding site. Mg(2+) contacts are provided by valine 537, histidine 539, and isoleucine 542. Arginine 584 contacts CoA. Lysine 609 carries the post-translational modification N6-acetyllysine.

This sequence belongs to the ATP-dependent AMP-binding enzyme family. Mg(2+) is required as a cofactor. Acetylated. Deacetylation by the SIR2-homolog deacetylase activates the enzyme.

The enzyme catalyses acetate + ATP + CoA = acetyl-CoA + AMP + diphosphate. Catalyzes the conversion of acetate into acetyl-CoA (AcCoA), an essential intermediate at the junction of anabolic and catabolic pathways. Acs undergoes a two-step reaction. In the first half reaction, Acs combines acetate with ATP to form acetyl-adenylate (AcAMP) intermediate. In the second half reaction, it can then transfer the acetyl group from AcAMP to the sulfhydryl group of CoA, forming the product AcCoA. In terms of biological role, enables the cell to use acetate during aerobic growth to generate energy via the TCA cycle, and biosynthetic compounds via the glyoxylate shunt. Acetylates CheY, the response regulator involved in flagellar movement and chemotaxis. This chain is Acetyl-coenzyme A synthetase, found in Escherichia coli O6:H1 (strain CFT073 / ATCC 700928 / UPEC).